Consider the following 441-residue polypeptide: Ribosomal protein uS12 methylthiotransferase RimO (441 aa).

The region spanning 8–118 (PKIGFVSLGC…VLEHVHHYVP (111 aa)) is the MTTase N-terminal domain. [4Fe-4S] cluster contacts are provided by cysteine 17, cysteine 53, cysteine 82, cysteine 150, cysteine 154, and cysteine 157. Residues 136-373 (LTPRHYAYLK…MQLQQQISAE (238 aa)) enclose the Radical SAM core domain. The 66-residue stretch at 376-441 (QEKVGREILV…DEYDLWGSRV (66 aa)) folds into the TRAM domain.

The protein belongs to the methylthiotransferase family. RimO subfamily. [4Fe-4S] cluster serves as cofactor.

The protein resides in the cytoplasm. It catalyses the reaction L-aspartate(89)-[ribosomal protein uS12]-hydrogen + (sulfur carrier)-SH + AH2 + 2 S-adenosyl-L-methionine = 3-methylsulfanyl-L-aspartate(89)-[ribosomal protein uS12]-hydrogen + (sulfur carrier)-H + 5'-deoxyadenosine + L-methionine + A + S-adenosyl-L-homocysteine + 2 H(+). Its function is as follows. Catalyzes the methylthiolation of an aspartic acid residue of ribosomal protein uS12. The polypeptide is Ribosomal protein uS12 methylthiotransferase RimO (Escherichia coli (strain SMS-3-5 / SECEC)).